A 319-amino-acid polypeptide reads, in one-letter code: Aspartate carbamoyltransferase catalytic subunit (319 aa).

Arg-55 and Thr-56 together coordinate carbamoyl phosphate. Lys-83 lines the L-aspartate pocket. The carbamoyl phosphate site is built by Arg-105, His-144, and Gln-147. L-aspartate-binding residues include Arg-177 and Arg-231. Carbamoyl phosphate-binding residues include Gly-272 and Pro-273.

The protein belongs to the aspartate/ornithine carbamoyltransferase superfamily. ATCase family. As to quaternary structure, heterododecamer (2C3:3R2) of six catalytic PyrB chains organized as two trimers (C3), and six regulatory PyrI chains organized as three dimers (R2).

The catalysed reaction is carbamoyl phosphate + L-aspartate = N-carbamoyl-L-aspartate + phosphate + H(+). Its pathway is pyrimidine metabolism; UMP biosynthesis via de novo pathway; (S)-dihydroorotate from bicarbonate: step 2/3. In terms of biological role, catalyzes the condensation of carbamoyl phosphate and aspartate to form carbamoyl aspartate and inorganic phosphate, the committed step in the de novo pyrimidine nucleotide biosynthesis pathway. This Nocardia farcinica (strain IFM 10152) protein is Aspartate carbamoyltransferase catalytic subunit.